A 148-amino-acid chain; its full sequence is Ribonuclease P protein component (148 aa).

The disordered stretch occupies residues 119-148 (PLPAAPGTMPPARAPRPSSLSPTEPDPRSD).

Belongs to the RnpA family. In terms of assembly, consists of a catalytic RNA component (M1 or rnpB) and a protein subunit.

The catalysed reaction is Endonucleolytic cleavage of RNA, removing 5'-extranucleotides from tRNA precursor.. Functionally, RNaseP catalyzes the removal of the 5'-leader sequence from pre-tRNA to produce the mature 5'-terminus. It can also cleave other RNA substrates such as 4.5S RNA. The protein component plays an auxiliary but essential role in vivo by binding to the 5'-leader sequence and broadening the substrate specificity of the ribozyme. The polypeptide is Ribonuclease P protein component (Xanthomonas campestris pv. campestris (strain 8004)).